A 387-amino-acid polypeptide reads, in one-letter code: Galactokinase (387 aa).

32–35 (EHTD) contacts substrate. ATP-binding positions include serine 66 and 123 to 129 (GAGLSSS). The Mg(2+) site is built by serine 129 and glutamate 161. The Proton acceptor role is filled by aspartate 173. Tyrosine 223 is a substrate binding site.

This sequence belongs to the GHMP kinase family. GalK subfamily.

It is found in the cytoplasm. It carries out the reaction alpha-D-galactose + ATP = alpha-D-galactose 1-phosphate + ADP + H(+). It functions in the pathway carbohydrate metabolism; galactose metabolism. In terms of biological role, catalyzes the transfer of the gamma-phosphate of ATP to D-galactose to form alpha-D-galactose-1-phosphate (Gal-1-P). The chain is Galactokinase from Enterococcus faecalis (strain ATCC 700802 / V583).